The primary structure comprises 469 residues: 3-isopropylmalate dehydratase large subunit (469 aa).

Cysteine 349, cysteine 409, and cysteine 412 together coordinate [4Fe-4S] cluster.

Belongs to the aconitase/IPM isomerase family. LeuC type 1 subfamily. In terms of assembly, heterodimer of LeuC and LeuD. [4Fe-4S] cluster serves as cofactor.

It catalyses the reaction (2R,3S)-3-isopropylmalate = (2S)-2-isopropylmalate. It participates in amino-acid biosynthesis; L-leucine biosynthesis; L-leucine from 3-methyl-2-oxobutanoate: step 2/4. In terms of biological role, catalyzes the isomerization between 2-isopropylmalate and 3-isopropylmalate, via the formation of 2-isopropylmaleate. The polypeptide is 3-isopropylmalate dehydratase large subunit (Methylorubrum extorquens (strain CM4 / NCIMB 13688) (Methylobacterium extorquens)).